Consider the following 395-residue polypeptide: Elongation factor Tu (395 aa).

In terms of domain architecture, tr-type G spans 10–204 (KPHVNIGTIG…AVDSYIPTPE (195 aa)). The tract at residues 19–26 (GHVDHGKT) is G1. 19-26 (GHVDHGKT) is a GTP binding site. Position 26 (T26) interacts with Mg(2+). A G2 region spans residues 60–64 (GITIS). Residues 81-84 (DCPG) form a G3 region. Residues 81-85 (DCPGH) and 136-139 (NKCD) each bind GTP. The G4 stretch occupies residues 136–139 (NKCD). Positions 174–176 (SAL) are G5.

It belongs to the TRAFAC class translation factor GTPase superfamily. Classic translation factor GTPase family. EF-Tu/EF-1A subfamily. Monomer. Post-translationally, phosphorylated on serine and/or threonine residue(s). Dephosphorylated by stp.

It localises to the cytoplasm. The enzyme catalyses GTP + H2O = GDP + phosphate + H(+). Functionally, GTP hydrolase that promotes the GTP-dependent binding of aminoacyl-tRNA to the A-site of ribosomes during protein biosynthesis. This is Elongation factor Tu from Listeria innocua serovar 6a (strain ATCC BAA-680 / CLIP 11262).